A 182-amino-acid polypeptide reads, in one-letter code: ATP-dependent protease subunit HslV (182 aa).

T10 is a catalytic residue. Na(+)-binding residues include A166, C169, and S172.

It belongs to the peptidase T1B family. HslV subfamily. In terms of assembly, a double ring-shaped homohexamer of HslV is capped on each side by a ring-shaped HslU homohexamer. The assembly of the HslU/HslV complex is dependent on binding of ATP.

Its subcellular location is the cytoplasm. The catalysed reaction is ATP-dependent cleavage of peptide bonds with broad specificity.. Its activity is regulated as follows. Allosterically activated by HslU binding. Functionally, protease subunit of a proteasome-like degradation complex believed to be a general protein degrading machinery. The polypeptide is ATP-dependent protease subunit HslV (Rickettsia peacockii (strain Rustic)).